A 335-amino-acid polypeptide reads, in one-letter code: Succinylglutamate desuccinylase (335 aa).

Zn(2+) contacts are provided by histidine 59, glutamate 62, and histidine 151. The active site involves glutamate 215.

This sequence belongs to the AspA/AstE family. Succinylglutamate desuccinylase subfamily. Requires Zn(2+) as cofactor.

The catalysed reaction is N-succinyl-L-glutamate + H2O = L-glutamate + succinate. The protein operates within amino-acid degradation; L-arginine degradation via AST pathway; L-glutamate and succinate from L-arginine: step 5/5. In terms of biological role, transforms N(2)-succinylglutamate into succinate and glutamate. The polypeptide is Succinylglutamate desuccinylase (Pseudomonas syringae pv. tomato (strain ATCC BAA-871 / DC3000)).